Reading from the N-terminus, the 818-residue chain is Cytosolic phospholipase A2 delta (818 aa).

The region spanning 5-124 (SPGGPPGHPY…LPGKLLRKTF (120 aa)) is the C2 domain. Positions 38, 44, 94, 96, and 102 each coordinate Ca(2+). In terms of domain architecture, PLA2c spans 273–818 (GCPEELAVHL…LEARPPRAQT (546 aa)). 330-331 (GG) contributes to the substrate binding site. Ser-361 functions as the Nucleophile in the catalytic mechanism. The active-site Proton acceptor is the Asp-647.

The cofactor is Ca(2+). Expressed in stratified squamous epithelia, such as those in skin and cervix, but not in other tissues. Strongly expressed in the upper spinous layer of the psoriatic epidermis, expressed weakly and discontinuously in atopic dermatitis and mycosis fungoides, and not detected in the epidermis of normal skin.

The protein resides in the cytoplasm. Its subcellular location is the cytosol. It is found in the membrane. It carries out the reaction a 1,2-diacyl-sn-glycero-3-phosphocholine + H2O = a 1-acyl-sn-glycero-3-phosphocholine + a fatty acid + H(+). The enzyme catalyses 1-hexadecanoyl-2-(5Z,8Z,11Z,14Z-eicosatetraenoyl)-sn-glycero-3-phosphocholine + H2O = 1-hexadecanoyl-sn-glycero-3-phosphocholine + (5Z,8Z,11Z,14Z)-eicosatetraenoate + H(+). The catalysed reaction is 1-hexadecanoyl-2-(9Z,12Z-octadecadienoyl)-sn-glycero-3-phosphocholine + H2O = (9Z,12Z)-octadecadienoate + 1-hexadecanoyl-sn-glycero-3-phosphocholine + H(+). It catalyses the reaction 1-hexadecanoyl-2-(9Z-octadecenoyl)-sn-glycero-3-phosphocholine + H2O = 1-hexadecanoyl-sn-glycero-3-phosphocholine + (9Z)-octadecenoate + H(+). It carries out the reaction 1-hexadecanoyl-2-(5Z,8Z,11Z,14Z-eicosatetraenoyl)-sn-glycero-3-phosphoethanolamine + H2O = 1-hexadecanoyl-sn-glycero-3-phosphoethanolamine + (5Z,8Z,11Z,14Z)-eicosatetraenoate + H(+). The enzyme catalyses 1-hexadecanoyl-2-(9Z,12Z-octadecadienoyl)-sn-glycero-3-phosphoethanolamine + H2O = 1-hexadecanoyl-sn-glycero-3-phosphoethanolamine + (9Z,12Z)-octadecadienoate + H(+). Its pathway is lipid metabolism; fatty acid metabolism. With respect to regulation, stimulated by cytosolic Ca(2+). In terms of biological role, calcium-dependent phospholipase A2 that selectively hydrolyzes glycerophospholipids in the sn-2 position. Has a preference for linoleic acid at the sn-2 position. The chain is Cytosolic phospholipase A2 delta from Homo sapiens (Human).